Reading from the N-terminus, the 417-residue chain is Phosphoglycerate kinase 1 (417 aa).

N-acetylserine is present on S2. Residues S2 and S4 each carry the phosphoserine modification. The residue at position 6 (K6) is an N6-succinyllysine. K11 carries the post-translational modification N6-acetyllysine. The (2R)-3-phosphoglycerate site is built by V23, D24, F25, N26, Q38, and R39. Positions 38–43 (QRIKAA) are mitochondrial targeting region exposed following cis-trans isomerization by PIN1 and recognized by the TOM complex for mitochondrial translocation of the protein. K48 is subject to N6-acetyllysine; alternate. N6-succinyllysine; alternate is present on K48. Residues S62, H63, G65, and R66 each coordinate (2R)-3-phosphoglycerate. K75 bears the N6-acetyllysine mark. The residue at position 76 (Y76) is a Phosphotyrosine. K86 and K91 each carry N6-acetyllysine. K97 is modified (N6-acetyllysine; alternate). An N6-(2-hydroxyisobutyryl)lysine; alternate modification is found at K97. Residues L122 and R123 each contribute to the (2R)-3-phosphoglycerate site. The residue at position 131 (K131) is an N6-acetyllysine; alternate. K131 bears the N6-malonyllysine; alternate mark. K146 carries the post-translational modification N6-acetyllysine. (2R)-3-phosphoglycerate is bound by residues H170 and R171. Position 191 is an N6-succinyllysine (K191). A Phosphotyrosine modification is found at Y196. An N6-acetyllysine modification is found at K199. A Phosphoserine modification is found at S203. G214 contacts ADP. G214 is a binding site for CDP. Residues A215 and K216 each coordinate AMP. A215 is an ATP binding site. A215 is a Mg(2+) binding site. The residue at position 216 (K216) is an N6-(2-hydroxyisobutyryl)lysine. Residues A218 and D219 each contribute to the Mg(2+) site. D219 provides a ligand contact to CDP. Residue K220 coordinates AMP. K220 provides a ligand contact to ATP. The residue at position 220 (K220) is an N6-(2-hydroxyisobutyryl)lysine. G238 provides a ligand contact to ADP. G238 provides a ligand contact to CDP. Position 239 (G239) interacts with AMP. Position 239 (G239) interacts with ATP. N6-acetyllysine occurs at positions 267 and 291. G313 provides a ligand contact to AMP. G313 is an ATP binding site. N6-(2-hydroxyisobutyryl)lysine is present on K323. 3 residues coordinate CDP: G338, V340, and F343. Residue F343 participates in ADP binding. E344 serves as a coordination point for AMP. E344 serves as a coordination point for ATP. K361 is modified (N6-acetyllysine). ATP-binding residues include D375 and T376. Position 375 (D375) interacts with Mg(2+).

It belongs to the phosphoglycerate kinase family. Monomer. Interacts with kinase MAPK1/ERK2; the interaction is direct, occurs under hypoxic conditions, and promotes its interaction with PIN1. Interacts with peptidyl-prolyl cis-trans isomerase PIN1; the interaction is direct, occurs under hypoxic conditions, and targets the protein to the mitochondrion by promoting interactions with the TOM complex. Interacts with mitochondrial circRNA mcPGK1 (via its 2nd stem-loop); the interaction is direct and targets the protein to the mitochondrion by promoting interactions with the TOM complex. Interacts with pyruvate dehydrogenase kinase PDK1; the interaction is direct, occurs under hypoxic conditions and leads to PDK1-mediated inhibition of pyruvate dehydrogenase complex activity. It depends on Mg(2+) as a cofactor. In terms of processing, phosphorylated at Ser-203 by MAPK1/ERK2 under hypoxic conditions, which promotes its mitochondrial targeting.

The protein localises to the cytoplasm. The protein resides in the cytosol. It is found in the mitochondrion matrix. It carries out the reaction (2R)-3-phosphoglycerate + ATP = (2R)-3-phospho-glyceroyl phosphate + ADP. The enzyme catalyses L-seryl-[protein] + ATP = O-phospho-L-seryl-[protein] + ADP + H(+). It functions in the pathway carbohydrate degradation; glycolysis; pyruvate from D-glyceraldehyde 3-phosphate: step 2/5. Functionally, catalyzes one of the two ATP producing reactions in the glycolytic pathway via the reversible conversion of 1,3-diphosphoglycerate to 3-phosphoglycerate. Both L- and D- forms of purine and pyrimidine nucleotides can be used as substrates, but the activity is much lower on pyrimidines. In addition to its role as a glycolytic enzyme, it seems that PGK-1 acts as a polymerase alpha cofactor protein (primer recognition protein). Acts as a protein kinase when localized to the mitochondrion where it phosphorylates pyruvate dehydrogenase kinase PDK1 to inhibit pyruvate dehydrogenase complex activity and suppress the formation of acetyl-coenzyme A from pyruvate, and consequently inhibit oxidative phosphorylation and promote glycolysis. May play a role in sperm motility. The chain is Phosphoglycerate kinase 1 (PGK1) from Cricetulus griseus (Chinese hamster).